A 184-amino-acid chain; its full sequence is Cbp/p300-interacting transactivator 4 (184 aa).

Low complexity predominate over residues 18 to 28 (PSAAAAHGPHA). 2 disordered regions span residues 18–67 (PSAA…YGAF) and 94–128 (TPYP…PAHA). Positions 104-126 (PNAPGGPPGPQPAPSAAAPPPPA) are enriched in pro residues.

It belongs to the CITED family. In terms of assembly, interacts via its C-terminal region with the CH1 domain of CREBBP and EP300. Interacts with all TFAP2/AP-2 isoforms. In terms of tissue distribution, expressed in most tissues examined with highest levels of expression in heart, liver, skeletal muscle and pancreas. Also expressed in bladder cell line ECV-304 and in various breast cancer cell lines. Also detected in both in situ and invasive breast tumors where its expression is down-regulated and mostly restricted to the cytoplasm of malignant epithelium. Down-regulation of expression is associated with elevated levels of HIF1A and increased tumor growth and angiogenesis.

The protein resides in the nucleus. It localises to the cytoplasm. Acts as a transcriptional coactivator for TFAP2/AP-2. Enhances estrogen-dependent transactivation mediated by estrogen receptors. May function as an inhibitor of transactivation by HIF1A by disrupting HIF1A interaction with CREBBP. May be involved in regulation of gene expression during development and differentiation of blood cells, endothelial cells and mammary epithelial cells. The protein is Cbp/p300-interacting transactivator 4 of Homo sapiens (Human).